The following is a 535-amino-acid chain: Beta-amylase (535 aa).

Residues 1 to 2 (ME) constitute a propeptide, removed in mature form. Valine 3 carries the post-translational modification N-acetylvaline. Residues aspartate 51, histidine 91, and aspartate 99 each coordinate substrate. Catalysis depends on glutamate 184, which acts as the Proton donor. Positions 293, 298, and 340 each coordinate substrate. Glutamate 378 functions as the Proton acceptor in the catalytic mechanism. Residues 379–380 (NA) and arginine 418 each bind substrate. A run of 3 repeats spans residues 489–499 (GPTGGMGGQAE), 500–510 (GPTCGMGGQVK), and 511–521 (GPTGGMGGQAE). Positions 489–532 (GPTGGMGGQAEGPTCGMGGQVKGPTGGMGGQAEDPTSGMGGELP) are 4 X 11 AA tandem repeats. Residues 490–535 (PTGGMGGQAEGPTCGMGGQVKGPTGGMGGQAEDPTSGMGGELPATM) constitute a propeptide, removed in mature form. The segment at 513-535 (TGGMGGQAEDPTSGMGGELPATM) is disordered. One copy of the 4; approximate repeat lies at 522–532 (DPTSGMGGELP).

The protein belongs to the glycosyl hydrolase 14 family. In terms of assembly, monomer. In terms of tissue distribution, endosperm.

It carries out the reaction Hydrolysis of (1-&gt;4)-alpha-D-glucosidic linkages in polysaccharides so as to remove successive maltose units from the non-reducing ends of the chains.. Functionally, catalyzes the liberation of maltose from 1,4-alpha-D glucans. The chain is Beta-amylase from Hordeum vulgare subsp. spontaneum (Wild barley).